The chain runs to 550 residues: Solute carrier family 22 member 11 (550 aa).

Residues 1–10 lie on the Cytoplasmic side of the membrane; the sequence is MAFSKLLEQA. The helical transmembrane segment at 11–31 threads the bilayer; it reads GGVGLFQTLQVLTFILPCLMI. Residues 32-142 lie on the Extracellular side of the membrane; it reads PSQMLLENFS…DLVCSSQGLK (111 aa). N-linked (GlcNAc...) asparagine glycans are attached at residues asparagine 39, asparagine 56, and asparagine 99. A helical membrane pass occupies residues 143–163; sequence PLSQSIFMSGILVGSFIWGLL. Over 164-174 the chain is Cytoplasmic; sequence SYRFGRKPMLS. Residues 175–195 traverse the membrane as a helical segment; the sequence is WCCLQLAVAGTSTIFAPTFVI. Residues 196-200 are Extracellular-facing; that stretch reads YCGLR. The chain crosses the membrane as a helical span at residues 201 to 221; the sequence is FVAAFGMAGIFLSSLTLMVEW. Topologically, residues 222–231 are cytoplasmic; it reads TTTSRRAVTM. A helical membrane pass occupies residues 232–252; that stretch reads TVVGCAFSAGQAALGGLAFAL. The Extracellular portion of the chain corresponds to 253–256; sequence RDWR. A helical membrane pass occupies residues 257 to 277; sequence TLQLAASVPFFAISLISWWLP. Topologically, residues 278 to 346 are cytoplasmic; it reads ESARWLIIKG…FCVPVLRWRS (69 aa). A helical transmembrane segment spans residues 347-367; the sequence is CAMLVVNFSLLISYYGLVFDL. The Extracellular segment spans residues 368-378; it reads QSLGRDIFLLQ. A helical transmembrane segment spans residues 379-399; it reads ALFGAVDFLGRATTALLLSFL. At 400 to 402 the chain is on the cytoplasmic side; sequence GRR. The chain crosses the membrane as a helical span at residues 403-423; sequence TIQAGSQAMAGLAILANMLVP. The Extracellular portion of the chain corresponds to 424 to 430; it reads QDLQTLR. Residues 431-451 form a helical membrane-spanning segment; the sequence is VVFAVLGKGCFGISLTCLTIY. Topologically, residues 452-463 are cytoplasmic; that stretch reads KAELFPTPVRMT. The helical transmembrane segment at 464–484 threads the bilayer; sequence ADGILHTVGRLGAMMGPLILM. Residues 485–490 are Extracellular-facing; the sequence is SRQALP. Residues 491–511 traverse the membrane as a helical segment; the sequence is LLPPLLYGVISIASSLVVLFF. Topologically, residues 512–550 are cytoplasmic; sequence LPETQGLPLPDTIQDLESQKSTAAQGNRQEAVTVESTSL. The tract at residues 531-550 is disordered; sequence KSTAAQGNRQEAVTVESTSL.

It belongs to the major facilitator (TC 2.A.1) superfamily. Organic cation transporter (TC 2.A.1.19) family. N-glycosylated. Contains several complex-type N-glycans. In terms of tissue distribution, expressed in placental trophoblasts, syncytiotrophoblast and cytotrophoblast. Also located in the proximal tubules in kidneys.

It localises to the cell membrane. It is found in the apical cell membrane. Its subcellular location is the basal cell membrane. It catalyses the reaction estrone 3-sulfate(out) + glutarate(in) = estrone 3-sulfate(in) + glutarate(out). It carries out the reaction dehydroepiandrosterone 3-sulfate(out) = dehydroepiandrosterone 3-sulfate(in). The catalysed reaction is prostaglandin F2alpha(out) = prostaglandin F2alpha(in). The enzyme catalyses prostaglandin E2(out) = prostaglandin E2(in). Antiporter that mediates the transport of conjugated steroids and other specific organic anions at the basal membrane of syncytiotrophoblast and at the apical membrane of proximal tubule epithelial cells, in exchange for anionic compounds. May be responsible for placental absorption of fetal-derived steroid sulfates such as estrone sulfate (E1S) and the steroid hormone precursor dehydroepiandrosterone sulfate (DHEA-S), as well as clearing waste products and xenobiotics from the fetus. Maybe also be involved in placental urate homeostasis. Facilitates the renal reabsorption of organic anions such as urate and derived steroid sulfates. Organic anion glutarate acts as conteranion for E1S renal uptake. Possible transport mode may also include DHEA-S/E1S exchange. Also interacts with inorganic anions such as chloride and hydroxyl ions, therefore possible transport modes may include E1S/Cl(-), E1S/OH(-), urate/Cl(-) and urate/OH(-). Also mediates the transport of prostaglandin E2 (PGE2) and prostaglandin F2-alpha (PGF2-alpha) and may be involved in their renal excretion. Also able to uptake anionic drugs, diuretics, bile salts and ochratoxin A. Mediates the unidirectional efflux of glutamate and aspartate. Glutamate efflux down its transmembrane gradient may drive SLC22A11/OAT4-mediated placental uptake of E1S. The chain is Solute carrier family 22 member 11 from Homo sapiens (Human).